Reading from the N-terminus, the 339-residue chain is Anthranilate phosphoribosyltransferase (339 aa).

Residues Gly-79, 82–83 (GD), Ser-87, 89–92 (NIST), 107–115 (KHGNRSISS), and Ser-119 contribute to the 5-phospho-alpha-D-ribose 1-diphosphate site. Gly-79 lines the anthranilate pocket. Ser-91 is a Mg(2+) binding site. Asn-110 provides a ligand contact to anthranilate. Residue Arg-165 coordinates anthranilate. Mg(2+) contacts are provided by Asp-224 and Glu-225.

It belongs to the anthranilate phosphoribosyltransferase family. Homodimer. Mg(2+) serves as cofactor.

It catalyses the reaction N-(5-phospho-beta-D-ribosyl)anthranilate + diphosphate = 5-phospho-alpha-D-ribose 1-diphosphate + anthranilate. The protein operates within amino-acid biosynthesis; L-tryptophan biosynthesis; L-tryptophan from chorismate: step 2/5. In terms of biological role, catalyzes the transfer of the phosphoribosyl group of 5-phosphorylribose-1-pyrophosphate (PRPP) to anthranilate to yield N-(5'-phosphoribosyl)-anthranilate (PRA). This chain is Anthranilate phosphoribosyltransferase, found in Listeria monocytogenes serovar 1/2a (strain ATCC BAA-679 / EGD-e).